Reading from the N-terminus, the 315-residue chain is Probable cytochrome c oxidase subunit 2 (315 aa).

Positions 6-53 (RHLSKPAYREEFKGDTSPRTAAYISNRADASLGSTYKLPLEAKFWKMS) constitute an RPE1 insert domain. 3 helical membrane passes run 41–61 (YKLP…CFLI), 96–116 (LLYI…FVCI), and 133–153 (VLIE…IAVP). H235, C270, C274, and H278 together coordinate Cu cation.

It belongs to the cytochrome c oxidase subunit 2 family. Requires Cu cation as cofactor. Heme serves as cofactor.

The protein localises to the cell membrane. The catalysed reaction is 4 Fe(II)-[cytochrome c] + O2 + 8 H(+)(in) = 4 Fe(III)-[cytochrome c] + 2 H2O + 4 H(+)(out). Its function is as follows. Subunits I and II form the functional core of the enzyme complex. Electrons originating in cytochrome c are transferred via heme a and Cu(A) to the binuclear center formed by heme a3 and Cu(B). This Rickettsia felis (strain ATCC VR-1525 / URRWXCal2) (Rickettsia azadi) protein is Probable cytochrome c oxidase subunit 2 (ctaC).